A 147-amino-acid chain; its full sequence is Hemoglobin subunit epsilon (147 aa).

Residues 3 to 147 enclose the Globin domain; the sequence is HFTAEEKSTI…VATALAHKYH (145 aa). Residues serine 14 and serine 51 each carry the phosphoserine modification. Residues histidine 64 and histidine 93 each contribute to the heme b site.

It belongs to the globin family. As to quaternary structure, heterotetramer of two alpha chains and two epsilon chains in early embryonic hemoglobin Gower-2; two zeta chains and two epsilon chains in early embryonic hemoglobin Gower-1. Red blood cells.

In terms of biological role, the epsilon chain is a beta-type chain of early mammalian embryonic hemoglobin. This Cheirogaleus medius (Fat-tailed dwarf lemur) protein is Hemoglobin subunit epsilon (HBE1).